A 161-amino-acid chain; its full sequence is TM2 domain-containing protein DDB_G0278163 (161 aa).

Over 1–24 (MGHHHHHHGGSGHHHHHHHHGSGH) the chain is Cytoplasmic. The helical transmembrane segment at 25-45 (YGGGAVLVTPIVTPVPVVYGS) threads the bilayer. Over 46-54 (RSSSYCPKS) the chain is Extracellular. Residues 52 to 100 (PKSMTVAYVLWFFFGILGFHRLYLGRVGTFFLYFFTAGVFGLGWLFDAF) enclose the TM2 domain. The helical transmembrane segment at 55-75 (MTVAYVLWFFFGILGFHRLYL) threads the bilayer. Residues 76–80 (GRVGT) lie on the Cytoplasmic side of the membrane. The chain crosses the membrane as a helical span at residues 81–101 (FFLYFFTAGVFGLGWLFDAFY). Over 102–161 (THKMVKHYNECEFTKSCVGQSPPATIPIYQSEGAYPTYQQVPQQPPQFYQPQQQQPQYQP) the chain is Extracellular. Positions 139–161 (YQQVPQQPPQFYQPQQQQPQYQP) are disordered.

Belongs to the TM2 family.

It localises to the membrane. The sequence is that of TM2 domain-containing protein DDB_G0278163 from Dictyostelium discoideum (Social amoeba).